Here is a 589-residue protein sequence, read N- to C-terminus: Kelch-like protein diablo (589 aa).

The segment at 1–22 (MGDVLISDRPPSPARLSHTSEK) is disordered. Positions 41–108 (CDVVINVSGR…CYTSHIVVEE (68 aa)) constitute a BTB domain. Residues 143–245 (CLGIRAFADT…SPKFLVGTVG (103 aa)) form the BACK domain. 6 Kelch repeats span residues 292 to 338 (VLFA…VLND), 340 to 386 (LYAV…VLDG), 387 to 433 (FLYA…VLGG), 435 to 480 (LYAI…VFNN), 482 to 527 (IYAV…VVNG), and 528 to 574 (QLYA…VMRA).

It participates in protein modification; protein ubiquitination. Its function is as follows. Probable substrate-specific adapter of an E3 ubiquitin-protein ligase complex which mediates the ubiquitination and subsequent proteasomal degradation of target proteins. May have a role in synapse differentiation and growth. The polypeptide is Kelch-like protein diablo (Aedes aegypti (Yellowfever mosquito)).